The primary structure comprises 310 residues: Cytochrome P450 monooxygenase ppzG (310 aa).

Position 288 (Cys288) interacts with heme.

It belongs to the cytochrome P450 family. Requires heme as cofactor.

Its pathway is secondary metabolite biosynthesis. Cytochrome P450 monooxygenase; part of the gene cluster that mediates the biosynthesis of pyrrolopyrazines, secondary metabolites showing insecticidal activity. The role of ppzG within the pathway has still to be determined. The single multifunctional NRPS ppzA is sufficient to produce peramine via condensation of 1-pyrroline-5-carboxylate and arginine, N-methylation of the alpha-amino group of arginine and reduction of the thioester and the cyclization to form an iminium ion resulting in release from the peptide synthetase. Deprotonation of this intermediate and oxidation of the pyrroline ring would give rise to peramine. In Epichloe species that produce only peramine, the peramine synthetase gene is not localized in a gene cluster, in contrast to Metarhizium species that contain additional pyrrolopyrazine biosynthesis genes. The 2-oxoglutarate-Fe(II) type oxidoreductase ppzC hydroxylates peramine to yield the newly identified compound 8-hydroxyperamine whereas ppzD converts L-proline into trans-4-hydroxy-L-proline, a precursor of peramine biosynthesis. The chain is Cytochrome P450 monooxygenase ppzG (ppzG) from Metarhizium majus (strain ARSEF 297).